Consider the following 460-residue polypeptide: Tyrosine-protein phosphatase non-receptor type 18 (460 aa).

Positions 26-291 constitute a Tyrosine-protein phosphatase domain; sequence LAGEFSDIQA…RFLYHTVAQM (266 aa). Substrate contacts are provided by residues D197, 229–235, and Q276; that span reads CSAGCGR. Catalysis depends on C229, which acts as the Phosphocysteine intermediate. The interval 361–460 is disordered; it reads GAPAGAGSGT…RDPPAEWTRV (100 aa). The segment covering 364–378 has biased composition (gly residues); sequence AGAGSGTQTGTGTGT. Y389 bears the Phosphotyrosine mark. Residue T393 is modified to Phosphothreonine. Y426 is modified (phosphotyrosine). Residues 449-460 show a composition bias toward basic and acidic residues; sequence GPRDPPAEWTRV.

The protein belongs to the protein-tyrosine phosphatase family. Non-receptor class 4 subfamily. In terms of assembly, interacts with PSTPIP1. As to expression, expressed in brain, colon and several tumor-derived cell lines.

Its subcellular location is the nucleus. The protein resides in the cytoplasm. It catalyses the reaction O-phospho-L-tyrosyl-[protein] + H2O = L-tyrosyl-[protein] + phosphate. Its function is as follows. Differentially dephosphorylate autophosphorylated tyrosine kinases which are known to be overexpressed in tumor tissues. The protein is Tyrosine-protein phosphatase non-receptor type 18 (PTPN18) of Homo sapiens (Human).